We begin with the raw amino-acid sequence, 293 residues long: Insulin-like growth factor-binding protein 3 (293 aa).

The first 27 residues, 1–27 (MQRARPALWAAALIALALLRGPPAARA), serve as a signal peptide directing secretion. The IGFBP N-terminal domain occupies 36–119 (PVVRCEPCDA…LDGRGICANA (84 aa)). Intrachain disulfides connect cysteine 40-cysteine 69, cysteine 43-cysteine 71, cysteine 51-cysteine 72, cysteine 60-cysteine 75, cysteine 83-cysteine 96, and cysteine 90-cysteine 116. N-linked (GlcNAc...) asparagine glycans are attached at residues asparagine 118 and asparagine 138. Disordered stretches follow at residues 132–166 (APPA…PDSK) and 178–213 (KKGH…TEYG). Serine 150 carries the post-translational modification Phosphoserine. A compositionally biased stretch (basic and acidic residues) spans 178-192 (KKGHAKDSQRYKVDY). Over residues 193-204 (ESQSTDTQNFSS) the composition is skewed to polar residues. An N-linked (GlcNAc...) asparagine glycan is attached at asparagine 201. Serine 203 is subject to Phosphoserine. The Thyroglobulin type-1 domain occupies 212 to 287 (YGPCRREMED…DVKGKGDVHC (76 aa)). 3 disulfides stabilise this stretch: cysteine 215/cysteine 242, cysteine 253/cysteine 264, and cysteine 266/cysteine 287.

As to quaternary structure, interacts with XLKD1. Binds IGF2 more than IGF1. Forms a ternary complex of about 140 to 150 kDa with IGF1 or IGF2 and a 85 kDa glycoprotein (ALS). Interacts with humanin; humanin competes with importin KPNB1 for binding to IGFBP3, blocking IGFBP3 nuclear import and IGFBP3-mediated apoptosis. Interacts with TMEM219. Interacts with RXRA; this interaction modulates the transcriptional activity of RXRA. Interacts with LRP1; this interaction mediates cell growth inhibition independent of IGF1. Phosphorylated by FAM20C in the extracellular medium. Phosphorylated by CK2; resulting in decreased nuclear localization.

It localises to the secreted. Its subcellular location is the nucleus. Its function is as follows. Multifunctional protein that plays a critical role in regulating the availability of IGFs such as IGF1 and IGF2 to their receptors and thereby regulates IGF-mediated cellular processes including proliferation, differentiation, and apoptosis in a cell-type specific manner. Also exhibits IGF-independent antiproliferative and apoptotic effects mediated by its receptor TMEM219/IGFBP-3R. Inhibits the positive effect of humanin on insulin sensitivity. Promotes testicular germ cell apoptosis. Acts via LRP-1/alpha2M receptor, also known as TGF-beta type V receptor, to mediate cell growth inhibition independent of IGF1. Mechanistically, induces serine-specific dephosphorylation of IRS1 or IRS2 upon ligation to its receptor, leading to the inhibitory cascade. In the nucleus, interacts with transcription factors such as retinoid X receptor-alpha/RXRA to regulate transcriptional signaling and apoptosis. The sequence is that of Insulin-like growth factor-binding protein 3 (IGFBP3) from Sus scrofa (Pig).